The following is a 335-amino-acid chain: GTPase Obg (335 aa).

In terms of domain architecture, Obg spans 1–158 (MFLDQITIEL…RQVELELKLI (158 aa)). Positions 159-334 (ADIGLVGFPN…LNSLFTNRLS (176 aa)) constitute an OBG-type G domain. GTP is bound by residues 165-172 (GFPNAGKS), 190-194 (FTTLQ), 215-218 (DIPG), 285-288 (NKID), and 315-317 (SGL). Positions 172 and 192 each coordinate Mg(2+).

It belongs to the TRAFAC class OBG-HflX-like GTPase superfamily. OBG GTPase family. As to quaternary structure, monomer. Requires Mg(2+) as cofactor.

The protein resides in the cytoplasm. In terms of biological role, an essential GTPase which binds GTP, GDP and possibly (p)ppGpp with moderate affinity, with high nucleotide exchange rates and a fairly low GTP hydrolysis rate. Plays a role in control of the cell cycle, stress response, ribosome biogenesis and in those bacteria that undergo differentiation, in morphogenesis control. This Chlamydia caviae (strain ATCC VR-813 / DSM 19441 / 03DC25 / GPIC) (Chlamydophila caviae) protein is GTPase Obg.